Consider the following 290-residue polypeptide: 3-keto-disaccharide hydrolase (290 aa).

An N-terminal signal peptide occupies residues M1 to S19. A lipid anchor (N-palmitoyl cysteine) is attached at C20. A lipid anchor (S-diacylglycerol cysteine) is attached at C20.

The protein resides in the cell membrane. It catalyses the reaction 3-dehydro-alpha,alpha-trehalose + H2O = 3-dehydro-D-glucose + D-glucose. Functionally, 3-keto-disaccharide hydrolase that preferentially hydrolyzes 3-keto-trehalose (3-dehydro-alpha,alpha-trehalose). Important for disaccharide utilization in the human gut. Also shows hydrolysis activity with the glucosinolates glucoraphanin or glucobrassicin, but with much lower efficiency. This Bacteroides thetaiotaomicron (strain ATCC 29148 / DSM 2079 / JCM 5827 / CCUG 10774 / NCTC 10582 / VPI-5482 / E50) protein is 3-keto-disaccharide hydrolase.